The primary structure comprises 465 residues: Mothers against decapentaplegic homolog 1 (465 aa).

Met-1 is modified (N-acetylmethionine). Residues 12–136 (PAVKRLLGWK…YKRVESPVLP (125 aa)) form the MH1 domain. Zn(2+)-binding residues include Cys-64, Cys-109, Cys-121, and His-126. The interval 162–249 (NEPHMPLNAT…QPMDTNMMAP (88 aa)) is disordered. Low complexity predominate over residues 179-210 (PNSHPFPHSPNSSYPNSPGSSSSTYPHSPTSS). The span at 221 to 232 (DTPPPAYLPPED) shows a compositional bias: pro residues. The MH2 domain maps to 271 to 465 (WCSIVYYELN…SPHNPISSVS (195 aa)). A Phosphothreonine; by MINK1, TNIK and MAP4K4 modification is found at Thr-322. The L3 loop stretch occupies residues 418–428 (KGWGAEYHRQD). 2 positions are modified to phosphoserine: Ser-463 and Ser-465.

This sequence belongs to the dwarfin/SMAD family. As to quaternary structure, found in a complex with SMAD4 and YY1. Interacts with HGS, NANOG and ZCCHC12. Upon C-terminus phosphorylation: forms trimers with another SMAD1 and the co-SMAD SMAD4. Interacts with PEBP2-alpha subunit, CREB-binding protein (CBP), p300, SMURF1, SMURF2, USP15 and HOXC8. Associates with ZNF423 or ZNF521 in response to BMP2 leading to activate transcription of BMP target genes. Interacts with SKOR1. Interacts (via MH2 domain) with LEMD3. Binding to LEMD3 results in at least a partial reduction of receptor-mediated phosphorylation. Forms a ternary complex with PSMB4 and OAZ1 before PSMB4 is incorporated into the 20S proteasome. Interacts (via MH2 domain) with FAM83G (via MH2 domain); in a SMAD4-independent manner. Interacts with ZC3H3. Interacts with TMEM119. Interacts (via MH1 and MH2 domains) with ZNF8. Interacts with RANBP3L; the interaction increases when SMAD1 is not phosphorylated and mediates SMAD1 nuclear export. Interacts with EGR1; this interaction inhibits SMAD1 dephosphorylation. Interacts with SMAD6. Interacts with YAP1. Interacts with MTMR4; negatively regulates BMP signaling through SMAD1 dephosphorylation and retention in endosomes. Phosphorylation of the C-terminal SVS motif by BMP type 1 receptor kinase activates SMAD1 by promoting dissociation from the receptor and trimerization with SMAD4. Phosphorylation by ERK2 MAP kinase in response to EGF or HGF prevents SMAD1 nuclear accumulation and transcriptional activity in response to BMP. Dephosphorylation, probably by PPM1A, induces its export from the nucleus to the cytoplasm. Dephosphorylation is inhibited by association with EGR1. Phosphorylation by CDK8/9 creates binding sites for YAP1, and subsequent phosphorylation by GSK3 switches off YAP1 binding and adds binding sites for SMURF1. In terms of processing, ubiquitinated by SMAD-specific E3 ubiquitin ligase SMURF1, leading to its degradation. Monoubiquitinated, leading to prevent DNA-binding. Deubiquitination by USP15 alleviates inhibition and promotes activation of TGF-beta target genes. Dephosphorylation, probably by PPM1A, induces its export from the nucleus to the cytoplasm. Phospho-SMAD1 is ubiquitinated by CHIP leading to disruption of the SMAD1-SMAD4 complex.

Its subcellular location is the cytoplasm. The protein resides in the nucleus. Functionally, transcriptional modulator that plays a role in various cellular processes, including embryonic development, cell differentiation, and tissue homeostasis. Upon BMP ligand binding to their receptors at the cell surface, is phosphorylated by activated type I BMP receptors (BMPRIs) and associates with SMAD4 to form an heteromeric complex which translocates into the nucleus acting as transcription factor. In turn, the hetero-trimeric complex recognizes cis-regulatory elements containing Smad Binding Elements (SBEs) to modulate the outcome of the signaling network. SMAD1/OAZ1/PSMB4 complex mediates the degradation of the CREBBP/EP300 repressor SNIP1. Positively regulates BMP4-induced expression of odontogenic development regulator MSX1 following IPO7-mediated nuclear import. In Bos taurus (Bovine), this protein is Mothers against decapentaplegic homolog 1 (SMAD1).